The primary structure comprises 20 residues: Equinatoxin-1'' (20 aa).

The tract at residues 3 to 12 is plays an important role in the hemolytic activity; the sequence is AVAGAVIEGA. The N-terminal region stretch occupies residues 11-20; that stretch reads GATLTFNVLQ.

The protein belongs to the actinoporin family. Sea anemone subfamily. Octamer or nonamer in membranes. Monomer in the soluble state.

The protein localises to the secreted. Its subcellular location is the nematocyst. The protein resides in the target cell membrane. Its function is as follows. Pore-forming protein that forms cations-selective hydrophilic pores of around 1 nm and causes cardiac stimulation and cytolysis. Pore formation is a multi-step process that involves specific recognition of membrane sphingomyelin (but neither cholesterol nor phosphatidylcholine) using aromatic rich region and adjacent phosphocholine (POC) binding site, firm binding to the membrane (mainly driven by hydrophobic interactions) accompanied by the transfer of the N-terminal region to the lipid-water interface and finally pore formation after oligomerization of monomers. Cytolytic effects include red blood cells hemolysis, platelet aggregation and lysis, cytotoxic and cytostatic effects on fibroblasts. Lethality in mammals has been ascribed to severe vasospasm of coronary vessels, cardiac arrhythmia, and inotropic effects. The chain is Equinatoxin-1'' from Actinia equina (Beadlet anemone).